A 197-amino-acid polypeptide reads, in one-letter code: Small ribosomal subunit protein uS4c (197 aa).

Residues 85–161 (MRLDNILFRL…TGKELANHLN (77 aa)) enclose the S4 RNA-binding domain.

The protein belongs to the universal ribosomal protein uS4 family. In terms of assembly, part of the 30S ribosomal subunit. Contacts protein S5. The interaction surface between S4 and S5 is involved in control of translational fidelity.

It localises to the plastid. Its function is as follows. One of the primary rRNA binding proteins, it binds directly to 16S rRNA where it nucleates assembly of the body of the 30S subunit. With S5 and S12 plays an important role in translational accuracy. This Cuscuta obtusiflora (Peruvian dodder) protein is Small ribosomal subunit protein uS4c (rps4).